The primary structure comprises 330 residues: DNA primase small subunit PriS (330 aa).

Active-site residues include Asp101 and Asp103. Positions 116, 119, 128, and 131 each coordinate Zn(2+). Asp235 is a catalytic residue.

The protein belongs to the eukaryotic-type primase small subunit family. As to quaternary structure, heterodimer of a small subunit (PriS) and a large subunit (PriL). It depends on Mg(2+) as a cofactor. Requires Mn(2+) as cofactor.

Its function is as follows. Catalytic subunit of DNA primase, an RNA polymerase that catalyzes the synthesis of short RNA molecules used as primers for DNA polymerase during DNA replication. The small subunit contains the primase catalytic core and has DNA synthesis activity on its own. Binding to the large subunit stabilizes and modulates the activity, increasing the rate of DNA synthesis while decreasing the length of the DNA fragments, and conferring RNA synthesis capability. The DNA polymerase activity may enable DNA primase to also catalyze primer extension after primer synthesis. May also play a role in DNA repair. The polypeptide is DNA primase small subunit PriS (Saccharolobus islandicus (strain Y.N.15.51 / Yellowstone #2) (Sulfolobus islandicus)).